The primary structure comprises 653 residues: Pentatricopeptide repeat-containing protein At3g14730 (653 aa).

14 PPR repeats span residues 59-93 (NVAT…GFLD), 95-119 (SPRA…VLVF), 125-159 (DVFG…GILP), 160-193 (DKYT…GFDS), 194-224 (DCYV…LPDR), 226-260 (DSVL…GVGV), 261-295 (SRHT…GSGS), 296-326 (DIVV…MDER), 327-361 (DLFT…GIRP), 362-396 (DIVT…GLLN), 401-431 (NEFI…MRVK), 432-466 (DSAS…GVKP), 467-497 (DEIT…METV), and 503-537 (TSDH…DNPV). The segment at 538 to 613 (VWRSILSSCR…TPGCSWIVLK (76 aa)) is type E motif. Positions 614–644 (NGVHTFFTGNQTHPEFKSIHDWLSLVISHMH) are type E(+) motif.

It belongs to the PPR family. PCMP-E subfamily.

This is Pentatricopeptide repeat-containing protein At3g14730 (PCMP-E31) from Arabidopsis thaliana (Mouse-ear cress).